The primary structure comprises 347 residues: Ribosomal RNA small subunit methyltransferase C (347 aa).

The protein belongs to the methyltransferase superfamily. RsmC family. Monomer.

The protein resides in the cytoplasm. It catalyses the reaction guanosine(1207) in 16S rRNA + S-adenosyl-L-methionine = N(2)-methylguanosine(1207) in 16S rRNA + S-adenosyl-L-homocysteine + H(+). Its function is as follows. Specifically methylates the guanine in position 1207 of 16S rRNA in the 30S particle. This is Ribosomal RNA small subunit methyltransferase C from Shewanella baltica (strain OS155 / ATCC BAA-1091).